The primary structure comprises 105 residues: uncharacterized protein (105 aa).

Residues 1–101 (MMDLGDKINP…KDIQEISAAV (101 aa)) form the Hcy-binding domain.

This is an uncharacterized protein from Saccharomyces cerevisiae (strain ATCC 204508 / S288c) (Baker's yeast).